A 438-amino-acid polypeptide reads, in one-letter code: Methylenetetrahydrofolate--tRNA-(uracil-5-)-methyltransferase TrmFO (438 aa).

10-15 (GGGLAG) lines the FAD pocket.

This sequence belongs to the MnmG family. TrmFO subfamily. It depends on FAD as a cofactor.

It is found in the cytoplasm. It carries out the reaction uridine(54) in tRNA + (6R)-5,10-methylene-5,6,7,8-tetrahydrofolate + NADH + H(+) = 5-methyluridine(54) in tRNA + (6S)-5,6,7,8-tetrahydrofolate + NAD(+). It catalyses the reaction uridine(54) in tRNA + (6R)-5,10-methylene-5,6,7,8-tetrahydrofolate + NADPH + H(+) = 5-methyluridine(54) in tRNA + (6S)-5,6,7,8-tetrahydrofolate + NADP(+). In terms of biological role, catalyzes the folate-dependent formation of 5-methyl-uridine at position 54 (M-5-U54) in all tRNAs. This Trichormus variabilis (strain ATCC 29413 / PCC 7937) (Anabaena variabilis) protein is Methylenetetrahydrofolate--tRNA-(uracil-5-)-methyltransferase TrmFO.